We begin with the raw amino-acid sequence, 219 residues long: Large ribosomal subunit protein uL3 (219 aa).

The protein belongs to the universal ribosomal protein uL3 family. In terms of assembly, part of the 50S ribosomal subunit. Forms a cluster with proteins L14 and L19.

Its function is as follows. One of the primary rRNA binding proteins, it binds directly near the 3'-end of the 23S rRNA, where it nucleates assembly of the 50S subunit. The polypeptide is Large ribosomal subunit protein uL3 (Chlamydia pneumoniae (Chlamydophila pneumoniae)).